A 618-amino-acid chain; its full sequence is Cationic amino acid transporter 3 (618 aa).

Over 1 to 36 the chain is Cytoplasmic; the sequence is MLWQALRRFGQKLVRRRVLELGMGETRLARCLSTLD. Residues 37–57 traverse the membrane as a helical segment; that stretch reads LVALGVGSTLGAGVYVLAGEV. Residues 58–61 lie on the Extracellular side of the membrane; it reads AKDK. Residues 62 to 82 traverse the membrane as a helical segment; that stretch reads AGPSIVICFLVAALSSVLAGL. At 83-107 the chain is on the cytoplasmic side; it reads CYAEFGARVPGSGSAYLYSYVTVGE. Residues 108–128 traverse the membrane as a helical segment; that stretch reads LWAFTTGWNLILSYVIGTASV. Over 129–162 the chain is Extracellular; sequence ARAWSSAFDNLIGNHISRTLKGTILLKMPHVLAE. A helical transmembrane segment spans residues 163–183; it reads YPDFFALALVLLLTGLLVLGA. Residues 184 to 191 are Cytoplasmic-facing; that stretch reads SKSALVTK. A helical membrane pass occupies residues 192 to 212; the sequence is VFTGMNLLVLSFVIISGFIKG. The Extracellular portion of the chain corresponds to 213–244; the sequence is ELRNWKLTKEDYCLTMSESNGTCSLDSMGSGG. Residue asparagine 232 is glycosylated (N-linked (GlcNAc...) asparagine). A helical membrane pass occupies residues 245–265; it reads FMPFGLEGILRGAATCFYAFV. The Cytoplasmic portion of the chain corresponds to 266 to 285; the sequence is GFDCIATTGEEAQNPQRSIP. A helical membrane pass occupies residues 286–306; it reads MGIVISMFICFLAYFGVSSAL. The Extracellular segment spans residues 307 to 335; the sequence is TLMMPYYKLHPESPLPEAFSYVGWEPARY. A helical transmembrane segment spans residues 336 to 356; the sequence is LVAIGSLCALSTSLLGSMFPM. At 357 to 380 the chain is on the cytoplasmic side; that stretch reads PRVMYSMAEDGLLFRVLAKVHSVT. Residues 381-401 traverse the membrane as a helical segment; the sequence is HIPIVATLVSGVIAAFMAFLF. The Extracellular portion of the chain corresponds to 402-406; it reads ELTDL. A helical transmembrane segment spans residues 407–427; sequence VDLMSIGTLLAHSLVSICVLI. Residues 428–474 are Cytoplasmic-facing; the sequence is LRYQPDQEMKSVEEEMELQEETLEAEKLTVQALFCPVNSIPTLLSGR. The chain crosses the membrane as a helical span at residues 475-495; sequence VVYVCSSLLAVLLTVLCLVLT. The Extracellular segment spans residues 496–506; the sequence is WWTTPLRSGDP. Residues 507–527 form a helical membrane-spanning segment; it reads VWVTVVVLILGLILAISGVIW. The Cytoplasmic segment spans residues 528-539; the sequence is RQPQNRTPLHFK. The helical transmembrane segment at 540–560 threads the bilayer; that stretch reads VPAVPLLPLVSIFVNVYLMMQ. Over 561–568 the chain is Extracellular; that stretch reads MTAGTWAR. A helical membrane pass occupies residues 569-589; sequence FGIWMLIGFAIYFGYGIQHSM. Residues 590–618 are Cytoplasmic-facing; sequence KEVKNHQTLPKTRAQTIDLDLTTSCVHSI. At threonine 605 the chain carries Phosphothreonine. At serine 617 the chain carries Phosphoserine.

The protein belongs to the amino acid-polyamine-organocation (APC) superfamily. Cationic amino acid transporter (CAT) (TC 2.A.3.3) family. In terms of processing, N-glycosylated. Expressed in adult brain and in a wide variety of embryonic tissues.

It localises to the cell membrane. It carries out the reaction L-arginine(in) = L-arginine(out). It catalyses the reaction L-lysine(in) = L-lysine(out). The enzyme catalyses L-ornithine(in) = L-ornithine(out). Functionally, uniporter that mediates the uptake of cationic L-amino acids such as L-arginine, L-lysine and L-ornithine. The transport is sodium ions- and pH-independent, moderately trans-stimulated and is mediated by passive diffusion. This chain is Cationic amino acid transporter 3, found in Mus musculus (Mouse).